The primary structure comprises 322 residues: Cytochrome c biogenesis protein CcsA (322 aa).

The next 7 membrane-spanning stretches (helical) occupy residues 2–22 (LFATLEHILTHISFSTISIVI), 44–64 (GMIATFFSITGFLVSRWLSSG), 68–88 (LSNLYESLIFLSWALYILHTI), 143–163 (MLLSYATLLCGSLLSAAILII), 226–246 (VISLGFTLLTIGILCGAVWAN), 260–274 (TWAFITWTIFAIYLH), and 289–309 (VASIGFLIIWICYFGINLLGI).

It belongs to the CcmF/CycK/Ccl1/NrfE/CcsA family. May interact with Ccs1.

Its subcellular location is the plastid. It localises to the chloroplast thylakoid membrane. Functionally, required during biogenesis of c-type cytochromes (cytochrome c6 and cytochrome f) at the step of heme attachment. This chain is Cytochrome c biogenesis protein CcsA, found in Brachypodium distachyon (Purple false brome).